The primary structure comprises 492 residues: 2-succinylbenzoate--CoA ligase (492 aa).

This sequence belongs to the ATP-dependent AMP-binding enzyme family. MenE subfamily.

The catalysed reaction is 2-succinylbenzoate + ATP + CoA = 2-succinylbenzoyl-CoA + AMP + diphosphate. It participates in quinol/quinone metabolism; 1,4-dihydroxy-2-naphthoate biosynthesis; 1,4-dihydroxy-2-naphthoate from chorismate: step 5/7. It functions in the pathway quinol/quinone metabolism; menaquinone biosynthesis. In terms of biological role, converts 2-succinylbenzoate (OSB) to 2-succinylbenzoyl-CoA (OSB-CoA). The chain is 2-succinylbenzoate--CoA ligase from Staphylococcus aureus (strain MRSA252).